A 341-amino-acid chain; its full sequence is Fructose-1,6-bisphosphatase, cytosolic (341 aa).

Mg(2+) contacts are provided by Glu-100, Asp-121, Leu-123, and Asp-124. Substrate is bound by residues 124-127 (DGSS), Asn-215, Tyr-247, Tyr-267, and Lys-277. Residue Glu-283 coordinates Mg(2+).

The protein belongs to the FBPase class 1 family. Requires Mg(2+) as cofactor.

It localises to the cytoplasm. The catalysed reaction is beta-D-fructose 1,6-bisphosphate + H2O = beta-D-fructose 6-phosphate + phosphate. This is Fructose-1,6-bisphosphatase, cytosolic (FBPban1) from Musa acuminata (Banana).